A 651-amino-acid polypeptide reads, in one-letter code: p-hydroxybenzoic acid efflux pump subunit AaeB (651 aa).

Transmembrane regions (helical) follow at residues 11–31 (FACK…WFEM), 41–61 (AAIV…SGAI), 65–85 (GLLR…IIMT), 91–111 (VVML…SSLV), 117–137 (YVFA…QSSP), 150–170 (EIIL…PRSV), 367–387 (LFWL…LGVV), 404–424 (FLIG…LVLP), 428–448 (QSLL…GIEI), 454–474 (GSLG…PMTF), and 480–500 (LDNA…IMLI).

This sequence belongs to the aromatic acid exporter ArAE (TC 2.A.85) family.

The protein localises to the cell inner membrane. Its function is as follows. Forms an efflux pump with AaeA. Could function as a metabolic relief valve, allowing to eliminate certain compounds when they accumulate to high levels in the cell. The sequence is that of p-hydroxybenzoic acid efflux pump subunit AaeB from Musicola paradisiaca (strain Ech703) (Dickeya paradisiaca).